A 256-amino-acid polypeptide reads, in one-letter code: tRNA pseudouridine synthase A (256 aa).

The active-site Nucleophile is the aspartate 52. Residue tyrosine 111 coordinates substrate.

Belongs to the tRNA pseudouridine synthase TruA family. Homodimer.

It catalyses the reaction uridine(38/39/40) in tRNA = pseudouridine(38/39/40) in tRNA. Functionally, formation of pseudouridine at positions 38, 39 and 40 in the anticodon stem and loop of transfer RNAs. The sequence is that of tRNA pseudouridine synthase A from Paramagnetospirillum magneticum (strain ATCC 700264 / AMB-1) (Magnetospirillum magneticum).